The primary structure comprises 210 residues: 3-demethoxyubiquinol 3-hydroxylase (210 aa).

Residues glutamate 59, glutamate 89, histidine 92, glutamate 141, glutamate 173, and histidine 176 each coordinate Fe cation.

Belongs to the COQ7 family. The cofactor is Fe cation.

The protein localises to the cell membrane. It catalyses the reaction a 5-methoxy-2-methyl-3-(all-trans-polyprenyl)benzene-1,4-diol + AH2 + O2 = a 3-demethylubiquinol + A + H2O. It participates in cofactor biosynthesis; ubiquinone biosynthesis. Catalyzes the hydroxylation of 2-nonaprenyl-3-methyl-6-methoxy-1,4-benzoquinol during ubiquinone biosynthesis. The protein is 3-demethoxyubiquinol 3-hydroxylase of Marinomonas sp. (strain MWYL1).